Consider the following 159-residue polypeptide: Phosphopantetheine adenylyltransferase (159 aa).

Residue Thr-9 participates in substrate binding. Residues 9–10 (TF) and His-17 contribute to the ATP site. Substrate-binding residues include Lys-41, Leu-73, and Arg-87. ATP contacts are provided by residues 88-90 (GLR), Glu-98, and 123-129 (YSFISST).

This sequence belongs to the bacterial CoaD family. As to quaternary structure, homohexamer. It depends on Mg(2+) as a cofactor.

The protein resides in the cytoplasm. The catalysed reaction is (R)-4'-phosphopantetheine + ATP + H(+) = 3'-dephospho-CoA + diphosphate. It functions in the pathway cofactor biosynthesis; coenzyme A biosynthesis; CoA from (R)-pantothenate: step 4/5. Its function is as follows. Reversibly transfers an adenylyl group from ATP to 4'-phosphopantetheine, yielding dephospho-CoA (dPCoA) and pyrophosphate. The chain is Phosphopantetheine adenylyltransferase from Pseudomonas putida (strain ATCC 700007 / DSM 6899 / JCM 31910 / BCRC 17059 / LMG 24140 / F1).